The sequence spans 122 residues: Large ribosomal subunit protein bL12 (122 aa).

Belongs to the bacterial ribosomal protein bL12 family. As to quaternary structure, homodimer. Part of the 50S ribosomal subunit; present in 4 copies per ribosome. Forms part of the ribosomal stalk which helps the ribosome interact with GTP-bound translation factors. Forms a pentameric L10(L12)2(L12)2 complex, where L10 forms an elongated spine to which 2 L12 dimers bind in a sequential fashion.

Its function is as follows. Forms part of the ribosomal stalk which helps the ribosome interact with GTP-bound translation factors. Is thus essential for accurate translation. The protein is Large ribosomal subunit protein bL12 of Geobacillus stearothermophilus (Bacillus stearothermophilus).